The primary structure comprises 466 residues: Neuronal acetylcholine receptor subunit non-alpha-3 (466 aa).

The N-terminal stretch at Met1–Leu28 is a signal peptide. Over Ala29–Leu235 the chain is Extracellular. N-linked (GlcNAc...) asparagine glycosylation is found at Asn54, Asn141, Asn169, and Asn208. Cys156 and Cys170 form a disulfide bridge. The next 3 membrane-spanning stretches (helical) occupy residues Pro236 to Leu260, Leu268 to Ile285, and Tyr302 to Val323. Residues His324–Arg438 lie on the Cytoplasmic side of the membrane. A helical transmembrane segment spans residues Ile439–Phe456.

Belongs to the ligand-gated ion channel (TC 1.A.9) family. Acetylcholine receptor (TC 1.A.9.1) subfamily. Neuronal AChR seems to be composed of two different type of subunits: alpha and non-alpha (beta). Retina, tectum and brain.

The protein localises to the postsynaptic cell membrane. Its subcellular location is the cell membrane. Functionally, after binding acetylcholine, the AChR responds by an extensive change in conformation that affects all subunits and leads to opening of an ion-conducting channel across the plasma membrane. In Carassius auratus (Goldfish), this protein is Neuronal acetylcholine receptor subunit non-alpha-3.